Reading from the N-terminus, the 249-residue chain is Orotidine 5'-phosphate decarboxylase (249 aa).

Residues aspartate 18, lysine 40, 67-76 (DLKYHDIPNT), threonine 127, arginine 188, glutamine 197, glycine 217, and arginine 218 contribute to the substrate site. The active-site Proton donor is the lysine 69.

Belongs to the OMP decarboxylase family. Type 1 subfamily. As to quaternary structure, homodimer.

The catalysed reaction is orotidine 5'-phosphate + H(+) = UMP + CO2. It functions in the pathway pyrimidine metabolism; UMP biosynthesis via de novo pathway; UMP from orotate: step 2/2. In terms of biological role, catalyzes the decarboxylation of orotidine 5'-monophosphate (OMP) to uridine 5'-monophosphate (UMP). This is Orotidine 5'-phosphate decarboxylase from Baumannia cicadellinicola subsp. Homalodisca coagulata.